Here is a 447-residue protein sequence, read N- to C-terminus: tRNA threonylcarbamoyladenosine dehydratase 2 (447 aa).

The next 3 membrane-spanning stretches (helical) occupy residues 9-29 (LITATALFTVAVTTITDYAWT), 86-106 (NQYVVVVGAGGVGSWVVNSLV), and 294-314 (ILPVLGTMPSLFGLTITTWIL).

This sequence belongs to the HesA/MoeB/ThiF family.

It is found in the mitochondrion outer membrane. Catalyzes the ATP-dependent dehydration of threonylcarbamoyladenosine at position 37 (t(6)A37) to form cyclic t(6)A37 (ct(6)A37) in tRNAs that read codons beginning with adenine. In Saccharomyces cerevisiae (strain ATCC 204508 / S288c) (Baker's yeast), this protein is tRNA threonylcarbamoyladenosine dehydratase 2 (TCD2).